We begin with the raw amino-acid sequence, 497 residues long: MDHATLAMILAIWFISFHFIKLLFSQQTTKLLPPGPKPLPIIGNILEVGKKPHRSFANLAKIHGPLISLRLGSVTTIVVSSADVAKEMFLKKDHPLSNRTIPNSVTAGDHHKLTMSWLPVSPKWRNFRKITAVHLLSPQRLDACQTFRHAKVQQLYEYVQECAQKGQAVDIGKAAFTTSLNLLSKLFFSVELAHHKSHTSQEFKELIWNIMEDIGKPNYADYFPILGCVDPSGIRRRLACSFDKLIAVFQGIICERLAPDSSTTTTTTTDDVLDVLLQLFKQNELTMGEINHLLVDIFDAGTDTTSSTFEWVMTELIRNPEMMEKAQEEIKQVLGKDKQIQESDIINLPYLQAIIKETLRLHPPTVFLLPRKADTDVELYGYIVPKDAQILVNLWAIGRDPNAWQNADIFSPERFIGCEIDVKGRDFGLLPFGAGRRICPGMNLAIRMLTLMLATLLQFFNWKLEGDISPKDLDMDEKFGIALQKTKPLKLIPIPRY.

The chain crosses the membrane as a helical span at residues 4-24 (ATLAMILAIWFISFHFIKLLF). Cysteine 439 serves as a coordination point for heme.

Belongs to the cytochrome P450 family. Heme is required as a cofactor.

Its subcellular location is the membrane. It functions in the pathway pigment biosynthesis; betalain biosynthesis. Converts L-DOPA to cyclo-DOPA in the betalain pathway. Provides the cyclo-DOPA moiety of all red betacyanins. The chain is Cytochrome P450 76AD1 from Beta vulgaris (Sugar beet).